We begin with the raw amino-acid sequence, 156 residues long: MNITVLAVGTKMPRWVDEAVAEYAKRFGRDVAYALKEIKPEKRGAGVNAAQGMAAEEKRILEAIPQGAFLVVLDERGKAPTSVELAEHLKTWQQNGEHVCFVIGGADGMTDRLKQQARIMMRLSSLTLPHGMVRVLLTEQLYRAASILHNHPYHRE.

S-adenosyl-L-methionine-binding positions include Leu-73, Gly-104, and Leu-123 to Leu-128.

Belongs to the RNA methyltransferase RlmH family. As to quaternary structure, homodimer.

It localises to the cytoplasm. It catalyses the reaction pseudouridine(1915) in 23S rRNA + S-adenosyl-L-methionine = N(3)-methylpseudouridine(1915) in 23S rRNA + S-adenosyl-L-homocysteine + H(+). In terms of biological role, specifically methylates the pseudouridine at position 1915 (m3Psi1915) in 23S rRNA. This Neisseria meningitidis serogroup C (strain 053442) protein is Ribosomal RNA large subunit methyltransferase H.